We begin with the raw amino-acid sequence, 332 residues long: Ribosomal RNA small subunit methyltransferase C (332 aa).

It belongs to the methyltransferase superfamily. RsmC family. As to quaternary structure, monomer.

It is found in the cytoplasm. The catalysed reaction is guanosine(1207) in 16S rRNA + S-adenosyl-L-methionine = N(2)-methylguanosine(1207) in 16S rRNA + S-adenosyl-L-homocysteine + H(+). Specifically methylates the guanine in position 1207 of 16S rRNA in the 30S particle. This chain is Ribosomal RNA small subunit methyltransferase C, found in Pseudomonas putida (strain ATCC 47054 / DSM 6125 / CFBP 8728 / NCIMB 11950 / KT2440).